Consider the following 629-residue polypeptide: Neuronal acetylcholine receptor subunit alpha-4 (629 aa).

The first 30 residues, 1-30, serve as a signal peptide directing secretion; it reads MEIGGSGAPPPLLLLPLLLLLGTGLLPASS. Over 32–249 the chain is Extracellular; that stretch reads IETRAHAEER…IIRRLPLFYT (218 aa). Asn59 is a glycosylation site (N-linked (GlcNAc...) asparagine). Residues Val78 and Glu80 each contribute to the Ca(2+) site. 2 N-linked (GlcNAc...) asparagine glycosylation sites follow: Asn109 and Asn176. Intrachain disulfides connect Cys163–Cys177 and Cys227–Cys228. Residues 250–270 form a helical membrane-spanning segment; the sequence is INLIIPCLLISCLTVLVFYLP. The S-palmitoyl cysteine moiety is linked to residue Cys273. 2 helical membrane-spanning segments follow: residues 279 to 299 and 312 to 332; these read LCIS…EIIP and LLFT…VLNV. Topologically, residues 333-603 are cytoplasmic; the sequence is HHRSPRTHTM…KYVAMVIDRI (271 aa). Disordered stretches follow at residues 420–459 and 503–529; these read ETQP…NSSG and SLTE…SDQT. Ser427 carries the phosphoserine modification. Over residues 431-442 the composition is skewed to basic and acidic residues; the sequence is KVPDLKTSEVEK. Low complexity predominate over residues 449-459; it reads PGSCHPPNSSG. The segment covering 504–529 has biased composition (polar residues); sequence LTESKPTGSPASLKTRPSQLPVSDQT. Residues Ser540 and Ser543 each carry the phosphoserine modification. A helical transmembrane segment spans residues 604–624; the sequence is FLWMFIIVCLLGTVGLFLPPW.

It belongs to the ligand-gated ion channel (TC 1.A.9) family. Acetylcholine receptor (TC 1.A.9.1) subfamily. Alpha-4/CHRNA4 sub-subfamily. As to quaternary structure, neuronal AChR is composed of two different types of subunits: alpha and beta. CHRNA4 forms heteropentameric neuronal acetylcholine receptors with CHRNB2 and CHRNB4, as well as CHRNA5 and CHRNB3 as accesory subunits. Found in two major stoichiometric forms, LS (low agonist sensitivity): (CHRNA4)3:(CHRNB2)2 and HS (high agonist sensitivity): (CHRNA4)2:(CHRNB2)3, the two stoichiometric forms differ in their unitary conductance, calcium permeability, ACh sensitivity and potentiation by divalent cation. Cells produce predominantly an (CHRNA4)3:(CHRNB2)2 nAChR. The (CHRNA4)2:(CHRNB2)3 expression is selectively up-regulated by nicotine and has lower single channel conductance and calcium permeability. In the striatum, also forms CHRNA4:CHRNA6:CHRNB2 complexes. Also found in the stoichiometric form: (CHRNA4:CHRNB2)2:CHRNB3. Interacts with RIC3; which is required for proper folding and assembly. Interacts with LYPD6.

The protein resides in the synaptic cell membrane. The protein localises to the cell membrane. It catalyses the reaction K(+)(in) = K(+)(out). The catalysed reaction is Na(+)(in) = Na(+)(out). The enzyme catalyses Ca(2+)(in) = Ca(2+)(out). With respect to regulation, activated by a myriad of ligands such as acetylcholine, cytisine, nicotine, choline and epibatidine. Channel potentiation by calcium is stoichiometry-selective, CHRNA4:CHRNB2 nACh receptor is achieved by calcium association with topographically distinct sites framed by anionic residues within the CHRNA4 subunit and between the CHRNA4 and CHRNB2 subunits. nAChR activity is inhibited by the antagonist alpha-conotoxins BuIA, PnIA, GID and MII, small disulfide-constrained peptides from cone snails. In terms of biological role, component of neuronal acetylcholine receptors (nAChRs) that function as pentameric, ligand-gated cation channels with high calcium permeability among other activities. nAChRs are excitatory neurotrasnmitter receptors formed by a collection of nAChR subunits known to mediate synaptic transmission in the nervous system and the neuromuscular junction. Each nAchR subunit confers differential attributes to channel properties, including activation, deactivation and desensitization kinetics, pH sensitivity, cation permeability, and binding to allosteric modulators. CHRNA4 forms heteropentameric neuronal acetylcholine receptors with CHRNB2 and CHRNB4, as well as CHRNA5 and CHRNB3 as accesory subunits. Is the most abundant nAChR subtype expressed in the central nervous system. Found in two major stoichiometric forms,(CHRNA4)3:(CHRNB2)2 and (CHRNA4)2:(CHRNB2)3, the two stoichiometric forms differ in their unitary conductance, calcium permeability, ACh sensitivity and potentiation by divalent cation. Involved in the modulation of calcium-dependent signaling pathways, influences the release of neurotransmitters, including dopamine, glutamate and GABA. This chain is Neuronal acetylcholine receptor subunit alpha-4 (Chrna4), found in Mus musculus (Mouse).